The sequence spans 456 residues: Chitobiosyldiphosphodolichol beta-mannosyltransferase (456 aa).

At 1–22 the chain is on the lumenal side; the sequence is MGEIIKYKGFDHVWQYSGPWLY. A helical membrane pass occupies residues 23–43; the sequence is CLIGIYISLPVLAYHILPWIF. The Cytoplasmic segment spans residues 44–103; that stretch reads HKNRSNKRKTISIFVLGDLGHSPRMCYHASSFSKLDYYVNLCGYVETEPSHQIVDDVNID. The helical intramembrane region spans 104 to 124; the sequence is IIPIEAIKNTNNLPYIMFAIL. Over 125–456 the chain is Cytoplasmic; the sequence is KVVRQCGKIW…TFSSIFENKS (332 aa).

It belongs to the glycosyltransferase group 1 family.

The protein localises to the endoplasmic reticulum membrane. The catalysed reaction is an N,N'-diacetylchitobiosyl-diphospho-di-trans,poly-cis-dolichol + GDP-alpha-D-mannose = a beta-D-Man-(1-&gt;4)-beta-D-GlcNAc-(1-&gt;4)-alpha-D-GlcNAc-diphospho-di-trans,poly-cis-dolichol + GDP + H(+). Its pathway is protein modification; protein glycosylation. Its function is as follows. Participates in the formation of the lipid-linked precursor oligosaccharide for N-glycosylation. Involved in assembling the dolichol-pyrophosphate-GlcNAc(2)-Man(5) intermediate on the cytoplasmic surface of the ER. In Candida albicans (strain SC5314 / ATCC MYA-2876) (Yeast), this protein is Chitobiosyldiphosphodolichol beta-mannosyltransferase (ALG1).